A 248-amino-acid chain; its full sequence is 3-deoxy-manno-octulosonate cytidylyltransferase (248 aa).

It belongs to the KdsB family.

The protein localises to the cytoplasm. It catalyses the reaction 3-deoxy-alpha-D-manno-oct-2-ulosonate + CTP = CMP-3-deoxy-beta-D-manno-octulosonate + diphosphate. It participates in nucleotide-sugar biosynthesis; CMP-3-deoxy-D-manno-octulosonate biosynthesis; CMP-3-deoxy-D-manno-octulosonate from 3-deoxy-D-manno-octulosonate and CTP: step 1/1. It functions in the pathway bacterial outer membrane biogenesis; lipopolysaccharide biosynthesis. Its function is as follows. Activates KDO (a required 8-carbon sugar) for incorporation into bacterial lipopolysaccharide in Gram-negative bacteria. The chain is 3-deoxy-manno-octulosonate cytidylyltransferase from Chlorobium chlorochromatii (strain CaD3).